Reading from the N-terminus, the 338-residue chain is Ketol-acid reductoisomerase (NADP(+)) (338 aa).

The KARI N-terminal Rossmann domain occupies 1 to 181 (MKVFYDKDAD…GGGRAGIIET (181 aa)). NADP(+)-binding positions include 24 to 27 (YGSQ), Arg47, and Ser52. His107 is an active-site residue. Gly133 is a binding site for NADP(+). The KARI C-terminal knotted domain maps to 182–327 (NFREETETDL…SKLRAMMPWI (146 aa)). Residues Asp190, Glu194, Glu226, and Glu230 each contribute to the Mg(2+) site. Ser251 serves as a coordination point for substrate.

This sequence belongs to the ketol-acid reductoisomerase family. Mg(2+) serves as cofactor.

The catalysed reaction is (2R)-2,3-dihydroxy-3-methylbutanoate + NADP(+) = (2S)-2-acetolactate + NADPH + H(+). It catalyses the reaction (2R,3R)-2,3-dihydroxy-3-methylpentanoate + NADP(+) = (S)-2-ethyl-2-hydroxy-3-oxobutanoate + NADPH + H(+). It participates in amino-acid biosynthesis; L-isoleucine biosynthesis; L-isoleucine from 2-oxobutanoate: step 2/4. The protein operates within amino-acid biosynthesis; L-valine biosynthesis; L-valine from pyruvate: step 2/4. Its function is as follows. Involved in the biosynthesis of branched-chain amino acids (BCAA). Catalyzes an alkyl-migration followed by a ketol-acid reduction of (S)-2-acetolactate (S2AL) to yield (R)-2,3-dihydroxy-isovalerate. In the isomerase reaction, S2AL is rearranged via a Mg-dependent methyl migration to produce 3-hydroxy-3-methyl-2-ketobutyrate (HMKB). In the reductase reaction, this 2-ketoacid undergoes a metal-dependent reduction by NADPH to yield (R)-2,3-dihydroxy-isovalerate. The polypeptide is Ketol-acid reductoisomerase (NADP(+)) (Burkholderia thailandensis (strain ATCC 700388 / DSM 13276 / CCUG 48851 / CIP 106301 / E264)).